The primary structure comprises 164 residues: NADH-quinone oxidoreductase subunit I (164 aa).

4Fe-4S ferredoxin-type domains are found at residues 55-85 and 95-124; these read LRRY…IDAE and TRYD…EGPN. Residues cysteine 65, cysteine 68, cysteine 71, cysteine 75, cysteine 104, cysteine 107, cysteine 110, and cysteine 114 each contribute to the [4Fe-4S] cluster site.

The protein belongs to the complex I 23 kDa subunit family. As to quaternary structure, NDH-1 is composed of 14 different subunits. Subunits NuoA, H, J, K, L, M, N constitute the membrane sector of the complex. [4Fe-4S] cluster serves as cofactor.

It localises to the cell inner membrane. It catalyses the reaction a quinone + NADH + 5 H(+)(in) = a quinol + NAD(+) + 4 H(+)(out). NDH-1 shuttles electrons from NADH, via FMN and iron-sulfur (Fe-S) centers, to quinones in the respiratory chain. The immediate electron acceptor for the enzyme in this species is believed to be ubiquinone. Couples the redox reaction to proton translocation (for every two electrons transferred, four hydrogen ions are translocated across the cytoplasmic membrane), and thus conserves the redox energy in a proton gradient. The polypeptide is NADH-quinone oxidoreductase subunit I (Roseobacter denitrificans (strain ATCC 33942 / OCh 114) (Erythrobacter sp. (strain OCh 114))).